The chain runs to 448 residues: Deoxyguanosinetriphosphate triphosphohydrolase-like protein (448 aa).

The 194-residue stretch at 67–260 (RLTHSLEVSQ…MELADDIAYG (194 aa)) folds into the HD domain.

This sequence belongs to the dGTPase family. Type 2 subfamily.

In Aliivibrio fischeri (strain ATCC 700601 / ES114) (Vibrio fischeri), this protein is Deoxyguanosinetriphosphate triphosphohydrolase-like protein.